Here is a 462-residue protein sequence, read N- to C-terminus: Mitochondrial-processing peptidase subunit beta (462 aa).

A mitochondrion-targeting transit peptide spans 1-20 (MFSRTASKFRNTRRLLSTIS). Residue H70 participates in Zn(2+) binding. The active-site Proton acceptor is E73. Residues H74 and E150 each coordinate Zn(2+). At S243 the chain carries Phosphoserine.

The protein belongs to the peptidase M16 family. Heterodimer of MAS2 (alpha) and MAS1 (beta) subunits, forming the mitochondrial processing protease (MPP) in which MAS2 is involved in substrate recognition and binding and MAS1 is the catalytic subunit. Zn(2+) serves as cofactor.

The protein localises to the mitochondrion matrix. It catalyses the reaction Release of N-terminal transit peptides from precursor proteins imported into the mitochondrion, typically with Arg in position P2.. Its activity is regulated as follows. Binding to MAS2 is required for catalytic activity. Inhibited by high levels (&gt; 1uM) of zinc. Inhibited by metal chelators ethylenediaminetetraacetic acid (EDTA) and O-phenanthroline. In terms of biological role, catalytic subunit of the essential mitochondrial processing protease (MPP), which cleaves the mitochondrial sequence off newly imported precursors proteins. Preferentially, cleaves after an arginine at position P2. This chain is Mitochondrial-processing peptidase subunit beta, found in Saccharomyces cerevisiae (strain ATCC 204508 / S288c) (Baker's yeast).